The primary structure comprises 220 residues: IQ domain-containing protein F3 (220 aa).

Positions 1 to 22 (MELDQDQKVETPEAAENGKDEM) are enriched in basic and acidic residues. A disordered region spans residues 1–81 (MELDQDQKVE…KQIQDEKTGI (81 aa)). The segment covering 23–50 (QLEEQTQDEDTTETETETETETEAEAEG) has biased composition (acidic residues). A coiled-coil region spans residues 69-93 (QAEKQIQDEKTGIKEADRAIQEQTQ). Positions 146 to 175 (AELAGVKIQAWWRGTLVRRTLLLAILSAWT) constitute an IQ domain.

The protein is IQ domain-containing protein F3 (Iqcf3) of Rattus norvegicus (Rat).